The following is a 98-amino-acid chain: NADH-ubiquinone oxidoreductase chain 4L (98 aa).

3 helical membrane passes run 1–21, 29–49, and 59–79; these read MLPIHLNLTVAFFLALAGVLI, TLLCLEGMMLSLFILMALMIT, and IPLILLVFSACEAGVGLALLV.

Belongs to the complex I subunit 4L family. As to quaternary structure, core subunit of respiratory chain NADH dehydrogenase (Complex I) which is composed of 45 different subunits.

It localises to the mitochondrion inner membrane. The catalysed reaction is a ubiquinone + NADH + 5 H(+)(in) = a ubiquinol + NAD(+) + 4 H(+)(out). Core subunit of the mitochondrial membrane respiratory chain NADH dehydrogenase (Complex I) which catalyzes electron transfer from NADH through the respiratory chain, using ubiquinone as an electron acceptor. Part of the enzyme membrane arm which is embedded in the lipid bilayer and involved in proton translocation. In Phascogale tapoatafa (Common wambenger), this protein is NADH-ubiquinone oxidoreductase chain 4L (MT-ND4L).